Consider the following 988-residue polypeptide: Voltage-gated delayed rectifier potassium channel KCNH5 (988 aa).

Over 1–217 the chain is Cytoplasmic; that stretch reads MPGGKRGLVA…LHYCAFKTTW (217 aa). Positions 12–90 constitute a PAS domain; it reads QNTFLENIVR…VRQTFDNYES (79 aa). The 53-residue stretch at 91 to 143 folds into the PAC domain; sequence NCFEVLLYKKNRTPVWFYMQIAPIRNEHEKVVLFLCTFKDITLFKQPIEDDST. The helical transmembrane segment at 218–238 threads the bilayer; sequence DWVILILTFYTAIMVPYNVSF. Topologically, residues 239-243 are extracellular; it reads KTKQN. The helical transmembrane segment at 244 to 264 threads the bilayer; it reads NIAWLVLDSVVDVIFLVDIVL. At 265-291 the chain is on the cytoplasmic side; that stretch reads NFHTTFVGPGGEVISDPKLIRMNYLKT. Residues 292 to 312 form a helical membrane-spanning segment; the sequence is WFVIDLLSCLPYDIINAFENV. At 313–319 the chain is on the extracellular side; it reads DEGISSL. A helical; Voltage-sensor membrane pass occupies residues 320 to 340; the sequence is FSSLKVVRLLRLGRVARKLDH. The Cytoplasmic portion of the chain corresponds to 341 to 346; that stretch reads YLEYGA. The helical transmembrane segment at 347 to 367 threads the bilayer; the sequence is AVLVLLVCVFGLVAHWLACIW. Topologically, residues 368–419 are extracellular; that stretch reads YSIGDYEVIDEVTNTIQIDSWLYQLALSIGTPYRYNTSAGIWEGGPSKDSLY. The N-linked (GlcNAc...) asparagine glycan is linked to asparagine 403. Positions 420-440 form an intramembrane region, pore-forming; sequence VSSLYFTMTSLTTIGFGNIAP. The Selectivity filter motif lies at 432–437; sequence TIGFGN. Topologically, residues 441–446 are extracellular; that stretch reads TTDVEK. The helical transmembrane segment at 447 to 467 threads the bilayer; sequence MFSVAMMMVGSLLYATIFGNV. Residues 468 to 988 lie on the Cytoplasmic side of the membrane; that stretch reads TTIFQQMYAN…PESDKDEIHF (521 aa). 550–667 provides a ligand contact to a nucleoside 3',5'-cyclic phosphate; it reads AFRLASDGCL…NSFSRNLTLT (118 aa). The segment at 704–715 is calmodulin-binding; the sequence is HPVRKLFQKFKQ. Positions 717–742 are disordered; it reads KELRNQGSTQGDPERNQLQVESRSLQ. The span at 721 to 742 shows a compositional bias: polar residues; that stretch reads NQGSTQGDPERNQLQVESRSLQ. A Glycyl lysine isopeptide (Lys-Gly) (interchain with G-Cter in ubiquitin) cross-link involves residue lysine 785. The interval 838-890 is disordered; it reads GLLSEDPKSSDSENSVTKNPLRKTDSCDSGITKSDLRLDKAGEARSPLEHSPI. Positions 871–885 are enriched in basic and acidic residues; the sequence is SDLRLDKAGEARSPL. The residue at position 883 (serine 883) is a Phosphoserine. A CAD (involved in subunit assembly) region spans residues 909–948; the sequence is TLQEVKHELKEDIQLLSCRMTALEKQVAEILKILSEKSVP. Positions 969-988 are disordered; that stretch reads DIFSVSRPESPESDKDEIHF. Over residues 977–988 the composition is skewed to basic and acidic residues; the sequence is ESPESDKDEIHF.

Belongs to the potassium channel family. H (Eag) (TC 1.A.1.20) subfamily. Kv10.2/KCNH5 sub-subfamily. Homotetramer. The potassium channel is probably composed of a homo- or heterotetrameric complex of pore-forming alpha subunits that can associate with modulating beta subunits. Heteromultimer with KCNH1/EAG. As to expression, detected in brain, skeletal muscle, heart, placenta, lung and liver, and at low levels in kidney.

It localises to the membrane. It carries out the reaction K(+)(in) = K(+)(out). Pore-forming (alpha) subunit of a voltage-gated delayed rectifier potassium channel that mediates outward-rectifying potassium currents which, on depolarization, reaches a steady-state level and do not inactivate. The kinetic is characterized by a slow activation time course and a small voltage dependence of the activation time constants, therefore, starts to open at more negative voltages. The activation kinetics depend on the prepulse potential and external divalent cation concentration. The time course of activation is biphasic with a fast and a slowly activating current component. With negative prepulses, the current activation is delayed and slowed down several fold, whereas more positive prepulses speed up activation, therefore the activation rate depends on holding potential. The chain is Voltage-gated delayed rectifier potassium channel KCNH5 from Homo sapiens (Human).